The following is a 148-amino-acid chain: Receptor activity-modifying protein 1 (148 aa).

Positions 1–26 (MAPGLRGLPRCGLWLLLAHHLFMVTA) are cleaved as a signal peptide. Cystine bridges form between cysteine 27–cysteine 82, cysteine 40–cysteine 72, and cysteine 57–cysteine 104. Residues 27-118 (CRDPDYGTLI…RALRDPPNSI (92 aa)) are Extracellular-facing. The helical transmembrane segment at 119–140 (LCPFIALPITVTLLMTALVVWR) threads the bilayer. The Cytoplasmic portion of the chain corresponds to 141–148 (SKRTEGIV).

This sequence belongs to the RAMP family. In terms of assembly, heterodimer of CALCRL and RAMP1; the interaction induces allosteric modulation of CALCRL function and CGRP1/CALCA and CGRP2/CALCB ligand specificity. Heterodimer of CALCR and RAMP1; interaction forms the AMYR1 receptor complex for amylin/IAPP and CGRP1/CALCA ligands. In terms of tissue distribution, expressed predominantly in the thymus, skeletal muscle, embryonic and adult brain, embryonic and adult lung, and colon.

It localises to the cell membrane. Functionally, accessory protein that interacts with and modulates the function of G-protein coupled receptors including calcitonin gene-related peptide type 1 receptor (CALCRL) and calcitonin receptor (CALCR). Required for the transport of CALCRL to the plasma membrane. Together with CALCRL, form the receptor complex for the calcitonin gene-related peptides CGRP1/CALCA and CGRP2/CALCB. Together with CALCR, form the AMYR1 receptor complex for amylin/IAPP and CGRP1/CALCA. The polypeptide is Receptor activity-modifying protein 1 (Mus musculus (Mouse)).